The following is a 108-amino-acid chain: uncharacterized protein (108 aa).

A run of 3 helical transmembrane segments spans residues 10–32, 45–67, and 77–99; these read SLCYFSVFIAPIIVPIVAYFVVN, ISHIVPFVGWLFLFIALLGGAVA, and FVIIGGAVIYFLVVIGIIIWNVI.

Its subcellular location is the cell membrane. This is an uncharacterized protein from Bacillus subtilis (strain 168).